Here is a 467-residue protein sequence, read N- to C-terminus: Multiple inositol polyphosphate phosphatase 1 (467 aa).

The first 15 residues, 1-15 (MRLLILLLLPLVAIA), serve as a signal peptide directing secretion. His-67 is a catalytic residue. 3 N-linked (GlcNAc...) asparagine glycosylation sites follow: Asn-120, Asn-159, and Asn-234. Residue Gly-441 is the site of GPI-anchor amidated glycine attachment. Positions 442–467 (GAPSLGSGVGGLLATTLAAMLVYLMH) are cleaved as a propeptide — removed in mature form.

This sequence belongs to the histidine acid phosphatase family. MINPP1 subfamily. N-glycosylated.

It is found in the cell membrane. It localises to the apical cell membrane. The protein localises to the basolateral cell membrane. The protein resides in the cell projection. Its subcellular location is the filopodium. It is found in the cell junction. It carries out the reaction (2R)-2,3-bisphosphoglycerate + H2O = (2R)-2-phosphoglycerate + phosphate. The catalysed reaction is 1D-myo-inositol hexakisphosphate + H2O = 1D-myo-inositol 1,2,4,5,6-pentakisphosphate + phosphate. The enzyme catalyses 1D-myo-inositol 1,2,4,5,6-pentakisphosphate + H2O = 1D-myo-inositol 1,2,5,6-tetrakisphosphate + phosphate. It catalyses the reaction 1D-myo-inositol 1,2,5,6-tetrakisphosphate + H2O = 1D-myo-inositol 1,2,6-trisphosphate + phosphate. Probable multiple inositol polyphosphate phosphatase that hydrolyzes 1D-myo-inositol 1,3,4,5,6-pentakisphosphate (InsP5[2OH]) and 1D-myo-inositol hexakisphosphate (InsP6) to a range of less phosphorylated inositol phosphates. This regulates the availability of these various small molecule second messengers and metal chelators which control many aspects of cell physiology. May have a dual substrate specificity, and function as a 2,3-bisphosphoglycerate 3-phosphatase hydrolyzing 2,3-bisphosphoglycerate to 2-phosphoglycerate. 2,3-bisphosphoglycerate (BPG) is formed as part of the Rapoport-Luebering glycolytic bypass. Has a role in embryonic tracheal development where it localizes to the leading edge of actively migrating branches. In these leading cells, enhances formation and/or maintenance of filopodia which may drive branch migration and elongation by cell-cell intercalation. The function in tracheal morphogenesis is dependent on its inositol polyphosphate phosphatase activity. This chain is Multiple inositol polyphosphate phosphatase 1, found in Drosophila melanogaster (Fruit fly).